A 118-amino-acid polypeptide reads, in one-letter code: Ribonuclease P protein component (118 aa).

It belongs to the RnpA family. In terms of assembly, consists of a catalytic RNA component (M1 or rnpB) and a protein subunit.

It carries out the reaction Endonucleolytic cleavage of RNA, removing 5'-extranucleotides from tRNA precursor.. Functionally, RNaseP catalyzes the removal of the 5'-leader sequence from pre-tRNA to produce the mature 5'-terminus. It can also cleave other RNA substrates such as 4.5S RNA. The protein component plays an auxiliary but essential role in vivo by binding to the 5'-leader sequence and broadening the substrate specificity of the ribozyme. The protein is Ribonuclease P protein component of Mycobacterium sp. (strain KMS).